A 99-amino-acid polypeptide reads, in one-letter code: UPF0125 protein BU253 (99 aa).

It belongs to the UPF0125 (RnfH) family.

This chain is UPF0125 protein BU253, found in Buchnera aphidicola subsp. Acyrthosiphon pisum (strain APS) (Acyrthosiphon pisum symbiotic bacterium).